Here is a 176-residue protein sequence, read N- to C-terminus: Large ribosomal subunit protein uL10 (176 aa).

Belongs to the universal ribosomal protein uL10 family. In terms of assembly, part of the ribosomal stalk of the 50S ribosomal subunit. The N-terminus interacts with L11 and the large rRNA to form the base of the stalk. The C-terminus forms an elongated spine to which L12 dimers bind in a sequential fashion forming a multimeric L10(L12)X complex.

Functionally, forms part of the ribosomal stalk, playing a central role in the interaction of the ribosome with GTP-bound translation factors. This is Large ribosomal subunit protein uL10 from Nocardia farcinica (strain IFM 10152).